Reading from the N-terminus, the 30-residue chain is Truncated interleukin-1-binding protein (30 aa).

Residues Met-1–Val-18 form the signal peptide.

The protein belongs to the interleukin-1 receptor family.

This Vaccinia virus (strain Copenhagen) (VACV) protein is Truncated interleukin-1-binding protein.